The primary structure comprises 732 residues: Photosystem I P700 chlorophyll a apoprotein A1 (732 aa).

The next 8 membrane-spanning stretches (helical) occupy residues 61-84 (VFSS…FHGA), 145-168 (LKYA…FHMH), 185-209 (NAGQ…HIAL), 278-296 (IASH…GIIA), 317-340 (WHSR…HHIY), 356-382 (LSLF…IFMI), 414-436 (IIMG…IYIH), and 510-528 (FMVH…LILM). The [4Fe-4S] cluster site is built by Cys552 and Cys561. A run of 2 helical transmembrane segments spans residues 568–589 (HVFL…HFFW) and 644–666 (LSGY…MFLW). Residue His655 coordinates chlorophyll a'. Chlorophyll a contacts are provided by Met663 and Tyr671. Residue Trp672 coordinates phylloquinone. Residues 704–724 (AVGLVHYMLGGIGTTWAFFLA) form a helical membrane-spanning segment.

This sequence belongs to the PsaA/PsaB family. As to quaternary structure, the PsaA/B heterodimer binds the P700 chlorophyll special pair and subsequent electron acceptors. PSI consists of a core antenna complex that captures photons, and an electron transfer chain that converts photonic excitation into a charge separation. The eukaryotic PSI reaction center is composed of at least 11 subunits. P700 is a chlorophyll a/chlorophyll a' dimer, A0 is one or more chlorophyll a, A1 is one or both phylloquinones and FX is a shared 4Fe-4S iron-sulfur center. is required as a cofactor.

The protein localises to the plastid. It is found in the chloroplast thylakoid membrane. It catalyses the reaction reduced [plastocyanin] + hnu + oxidized [2Fe-2S]-[ferredoxin] = oxidized [plastocyanin] + reduced [2Fe-2S]-[ferredoxin]. In terms of biological role, psaA and PsaB bind P700, the primary electron donor of photosystem I (PSI), as well as the electron acceptors A0, A1 and FX. PSI is a plastocyanin/cytochrome c6-ferredoxin oxidoreductase, converting photonic excitation into a charge separation, which transfers an electron from the donor P700 chlorophyll pair to the spectroscopically characterized acceptors A0, A1, FX, FA and FB in turn. Oxidized P700 is reduced on the lumenal side of the thylakoid membrane by plastocyanin or cytochrome c6. The protein is Photosystem I P700 chlorophyll a apoprotein A1 of Heterocapsa triquetra (Dinoflagellate).